The chain runs to 1938 residues: Myosin-13 (1938 aa).

In terms of domain architecture, Myosin N-terminal SH3-like spans 33–82 (DSKKACFVADNKEMYVKGMIQTRENDKVIVKTLDDRMLTLNNDQVFPMNP). Positions 86 to 782 (DKIEDMAMMT…LLGLLEEMRD (697 aa)) constitute a Myosin motor domain. K130 bears the N6,N6,N6-trimethyllysine mark. 179–186 (GESGAGKT) is a binding site for ATP. Actin-binding regions lie at residues 659–681 (LNKL…IPNE) and 761–775 (RFGN…GLLG). Residues 785–814 (LVTLMTSTQAVCRGYLMRVEFKKMMERRDS) enclose the IQ domain. Positions 843–1938 (LLKSAEAEKE…RDVGSQKMEE (1096 aa)) form a coiled coil. The disordered stretch occupies residues 1917 to 1938 (AESQVNKLRAKSRDVGSQKMEE). A compositionally biased stretch (basic and acidic residues) spans 1927–1938 (KSRDVGSQKMEE).

This sequence belongs to the TRAFAC class myosin-kinesin ATPase superfamily. Myosin family. Muscle myosin is a hexameric protein that consists of 2 heavy chain subunits (MHC), 2 alkali light chain subunits (MLC) and 2 regulatory light chain subunits (MLC-2). Specifically expressed in extraocular and laryngeal muscles.

Its subcellular location is the cytoplasm. It is found in the myofibril. Its function is as follows. Fast twitching myosin mediating the high-velocity and low-tension contractions of specific striated muscles. This chain is Myosin-13 (MYH13), found in Homo sapiens (Human).